The chain runs to 342 residues: Methylthioribose-1-phosphate isomerase (342 aa).

Substrate-binding positions include 49-51 (RGA), Arg86, and Gln187. The active-site Proton donor is the Asp228. Residue 238-239 (NK) participates in substrate binding.

It belongs to the eIF-2B alpha/beta/delta subunits family. MtnA subfamily.

The catalysed reaction is 5-(methylsulfanyl)-alpha-D-ribose 1-phosphate = 5-(methylsulfanyl)-D-ribulose 1-phosphate. Its pathway is amino-acid biosynthesis; L-methionine biosynthesis via salvage pathway; L-methionine from S-methyl-5-thio-alpha-D-ribose 1-phosphate: step 1/6. Catalyzes the interconversion of methylthioribose-1-phosphate (MTR-1-P) into methylthioribulose-1-phosphate (MTRu-1-P). The sequence is that of Methylthioribose-1-phosphate isomerase from Enterobacter sp. (strain 638).